Reading from the N-terminus, the 352-residue chain is NAD(P)H pyrophosphatase NUDT13, mitochondrial (352 aa).

The transit peptide at 1 to 20 (MSLYCRTFFRRKSFGCYRLL) directs the protein to the mitochondrion. Residues 196–323 (PQMAPVVITL…SLALQPSEAS (128 aa)) enclose the Nudix hydrolase domain. The Nudix box signature appears at 216–240 (RQSSFPKGLYSALAGFCDIGESVEE).

This sequence belongs to the Nudix hydrolase family. Mg(2+) serves as cofactor. The cofactor is Mn(2+).

It localises to the mitochondrion. It catalyses the reaction NADH + H2O = reduced beta-nicotinamide D-ribonucleotide + AMP + 2 H(+). It carries out the reaction NAD(+) + H2O = beta-nicotinamide D-ribonucleotide + AMP + 2 H(+). The enzyme catalyses NADPH + H2O = reduced beta-nicotinamide D-ribonucleotide + adenosine 2',5'-bisphosphate + 2 H(+). Its function is as follows. NAD(P)H pyrophosphatase that hydrolyzes NADH into NMNH and AMP, and NADPH into NMNH and 2',5'-ADP. Has a marked preference for the reduced pyridine nucleotides. Does not show activity toward NAD-capped RNAs; the NAD-cap is an atypical cap present at the 5'-end of some RNAs. This is NAD(P)H pyrophosphatase NUDT13, mitochondrial from Mus musculus (Mouse).